Reading from the N-terminus, the 218-residue chain is Ribose-5-phosphate isomerase A (218 aa).

Substrate contacts are provided by residues T28 to T31, D81 to D84, and K94 to G97. E103 functions as the Proton acceptor in the catalytic mechanism. K121 is a substrate binding site.

This sequence belongs to the ribose 5-phosphate isomerase family. As to quaternary structure, homodimer.

The enzyme catalyses aldehydo-D-ribose 5-phosphate = D-ribulose 5-phosphate. It participates in carbohydrate degradation; pentose phosphate pathway; D-ribose 5-phosphate from D-ribulose 5-phosphate (non-oxidative stage): step 1/1. Functionally, catalyzes the reversible conversion of ribose-5-phosphate to ribulose 5-phosphate. This is Ribose-5-phosphate isomerase A from Psychromonas ingrahamii (strain DSM 17664 / CCUG 51855 / 37).